The primary structure comprises 645 residues: Nucleolar GTP-binding protein 1 (645 aa).

An OBG-type G domain is found at 168-340 (RTLLICGYPN…VRNKACEKLL (173 aa)). GTP contacts are provided by residues 174-181 (GYPNVGKS), 220-224 (DTPGI), and 288-291 (NKTD). The interval 567-645 (GQNDSMASGS…KRGIGKSDFR (79 aa)) is disordered. Residues 612 to 624 (NRDARQGEADRHA) are compositionally biased toward basic and acidic residues.

The protein belongs to the TRAFAC class OBG-HflX-like GTPase superfamily. OBG GTPase family. NOG subfamily.

The protein resides in the nucleus. The protein localises to the nucleolus. Its function is as follows. Involved in the biogenesis of the 60S ribosomal subunit. The polypeptide is Nucleolar GTP-binding protein 1 (NOG1) (Candida glabrata (strain ATCC 2001 / BCRC 20586 / JCM 3761 / NBRC 0622 / NRRL Y-65 / CBS 138) (Yeast)).